A 141-amino-acid chain; its full sequence is Transmembrane protein 216 (141 aa).

The next 4 membrane-spanning stretches (helical) occupy residues 15–35, 49–69, 82–102, and 115–135; these read VLFF…LLIF, LVLD…RLFF, LGIS…YLLL, and SILL…LATF.

In terms of assembly, part of the tectonic-like complex (also named B9 complex). Interacts with TMEM107.

The protein localises to the membrane. The protein resides in the cytoplasm. It localises to the cytoskeleton. Its subcellular location is the cilium basal body. Functionally, part of the tectonic-like complex which is required for tissue-specific ciliogenesis and may regulate ciliary membrane composition. This chain is Transmembrane protein 216 (Tmem216), found in Mus musculus (Mouse).